Reading from the N-terminus, the 545-residue chain is Chaperonin GroEL (545 aa).

Residues 30–33 (TLGP), Lys51, 87–91 (DGTTT), Gly415, and Asp495 contribute to the ATP site.

It belongs to the chaperonin (HSP60) family. Forms a cylinder of 14 subunits composed of two heptameric rings stacked back-to-back. Interacts with the co-chaperonin GroES.

The protein resides in the cytoplasm. The enzyme catalyses ATP + H2O + a folded polypeptide = ADP + phosphate + an unfolded polypeptide.. Functionally, together with its co-chaperonin GroES, plays an essential role in assisting protein folding. The GroEL-GroES system forms a nano-cage that allows encapsulation of the non-native substrate proteins and provides a physical environment optimized to promote and accelerate protein folding. This Shewanella sp. (strain ANA-3) protein is Chaperonin GroEL.